The sequence spans 257 residues: Imidazole glycerol phosphate synthase subunit HisF (257 aa).

Residues D12 and D131 contribute to the active site.

This sequence belongs to the HisA/HisF family. In terms of assembly, heterodimer of HisH and HisF.

The protein localises to the cytoplasm. It catalyses the reaction 5-[(5-phospho-1-deoxy-D-ribulos-1-ylimino)methylamino]-1-(5-phospho-beta-D-ribosyl)imidazole-4-carboxamide + L-glutamine = D-erythro-1-(imidazol-4-yl)glycerol 3-phosphate + 5-amino-1-(5-phospho-beta-D-ribosyl)imidazole-4-carboxamide + L-glutamate + H(+). The protein operates within amino-acid biosynthesis; L-histidine biosynthesis; L-histidine from 5-phospho-alpha-D-ribose 1-diphosphate: step 5/9. In terms of biological role, IGPS catalyzes the conversion of PRFAR and glutamine to IGP, AICAR and glutamate. The HisF subunit catalyzes the cyclization activity that produces IGP and AICAR from PRFAR using the ammonia provided by the HisH subunit. The chain is Imidazole glycerol phosphate synthase subunit HisF from Paraburkholderia xenovorans (strain LB400).